The chain runs to 380 residues: Cytochrome b (380 aa).

A run of 4 helical transmembrane segments spans residues 34–54 (FGSL…LLAM), 78–99 (WLIR…YLHI), 114–134 (WNTG…GYVL), and 179–199 (FFAL…IHLT). The heme b site is built by His-84 and His-98. The heme b site is built by His-183 and His-197. His-202 contacts a ubiquinone. 4 helical membrane-spanning segments follow: residues 227–247 (LKDI…ALFS), 289–309 (LGGV…PLLH), 321–341 (LSQL…WIGS), and 348–368 (FIII…VLFP).

The protein belongs to the cytochrome b family. In terms of assembly, the cytochrome bc1 complex contains 11 subunits: 3 respiratory subunits (MT-CYB, CYC1 and UQCRFS1), 2 core proteins (UQCRC1 and UQCRC2) and 6 low-molecular weight proteins (UQCRH/QCR6, UQCRB/QCR7, UQCRQ/QCR8, UQCR10/QCR9, UQCR11/QCR10 and a cleavage product of UQCRFS1). This cytochrome bc1 complex then forms a dimer. Requires heme b as cofactor.

The protein resides in the mitochondrion inner membrane. In terms of biological role, component of the ubiquinol-cytochrome c reductase complex (complex III or cytochrome b-c1 complex) that is part of the mitochondrial respiratory chain. The b-c1 complex mediates electron transfer from ubiquinol to cytochrome c. Contributes to the generation of a proton gradient across the mitochondrial membrane that is then used for ATP synthesis. The polypeptide is Cytochrome b (MT-CYB) (Oceanodroma melania (Black storm-petrel)).